Here is a 115-residue protein sequence, read N- to C-terminus: MKKAYRLKSRLAFQSVYAQGRSVANRAAVVHVLKQQAGTPTRVGFAAGRKLGKAVVRNRAKRRLREAVRLLWPRVRQGYYIVVIARQAALDMPFPELRQKVEELFERAGLLQREG.

The protein belongs to the RnpA family. In terms of assembly, consists of a catalytic RNA component (M1 or rnpB) and a protein subunit.

It catalyses the reaction Endonucleolytic cleavage of RNA, removing 5'-extranucleotides from tRNA precursor.. RNaseP catalyzes the removal of the 5'-leader sequence from pre-tRNA to produce the mature 5'-terminus. It can also cleave other RNA substrates such as 4.5S RNA. The protein component plays an auxiliary but essential role in vivo by binding to the 5'-leader sequence and broadening the substrate specificity of the ribozyme. In Symbiobacterium thermophilum (strain DSM 24528 / JCM 14929 / IAM 14863 / T), this protein is Ribonuclease P protein component.